We begin with the raw amino-acid sequence, 337 residues long: MYSVSIIGASGYTGAQLVQLVLQHPKLELAGTYVSENSNDANKSIAELHGNLAHVNATLTPISDTALSEMANGVDFIFLATPHEASHDWMPILSSGKAKVLDLSGAFRIKDTAVFEQFYGFPHTQTQSLAQAVYGLAEWHEAQIASADVIAVPGCYPTASLSALKPLAHNGLLDESVRPVINAVSGVSGAGRKASLTTSFFEVSLQAYGVLGHRHTPEIEAYLGTPVIFTPHLGNFKRGILATVTVKVKAGTTSAQLEKAYTDAYADKPIVRLRKSFPKIDDVAHTPFVDLHWKLDEASGYAVVTAAIDNVMKGAASQAIQCLNIMTKQPIETGLVL.

Cysteine 155 is a catalytic residue.

It belongs to the NAGSA dehydrogenase family. Type 1 subfamily.

The protein localises to the cytoplasm. The enzyme catalyses N-acetyl-L-glutamate 5-semialdehyde + phosphate + NADP(+) = N-acetyl-L-glutamyl 5-phosphate + NADPH + H(+). The protein operates within amino-acid biosynthesis; L-arginine biosynthesis; N(2)-acetyl-L-ornithine from L-glutamate: step 3/4. In terms of biological role, catalyzes the NADPH-dependent reduction of N-acetyl-5-glutamyl phosphate to yield N-acetyl-L-glutamate 5-semialdehyde. The sequence is that of N-acetyl-gamma-glutamyl-phosphate reductase from Alteromonas mediterranea (strain DSM 17117 / CIP 110805 / LMG 28347 / Deep ecotype).